The primary structure comprises 920 residues: Nonribosomal peptide synthetase atrA (920 aa).

The segment at 13–428 (AAAQERCGRV…AGRLKETMII (416 aa)) is adenylation (A) domain. The region spanning 558–637 (PPKDELERSL…ELSAALHDLQ (80 aa)) is the Carrier domain. O-(pantetheine 4'-phosphoryl)serine is present on Ser595. The thioesterase (TE) domain stretch occupies residues 656-905 (PLWLIHPGVG…YTMLAPEHVF (250 aa)).

The protein belongs to the NRP synthetase family.

It catalyses the reaction 2 3-(4-hydroxyphenyl)pyruvate + 2 ATP = atromentin + 2 AMP + 2 diphosphate + H(+). In terms of biological role, nonribosomal peptide synthetase that mediates the biosynthesis of atromentin. AtrA first activates 4-hydroxyphenylpyruvate (HPPA) through its A domain to AMP-HPPA. The HPPA unit is then loaded to the T domain and eventually transferred to the TE domain. Another HPPA unit is then loaded onto the T domain. The TE domain then catalyzes the condensation of the two HPPA units and the release of atromentin via cyclization. The chain is Nonribosomal peptide synthetase atrA from Aspergillus terreus (strain NIH 2624 / FGSC A1156).